Reading from the N-terminus, the 1036-residue chain is PDZ domain-containing RING finger protein 4 (1036 aa).

The RING-type; degenerate zinc finger occupies 18 to 56; it reads CKLCGQVLEEPLCTPCGHVFCASCLLPWAVRRRRCPLQC. Residues 129 to 160 are compositionally biased toward gly residues; sequence ARGGCGPTPRAGRGGGARGGPPGGRWGRGRGP. The disordered stretch occupies residues 129 to 161; it reads ARGGCGPTPRAGRGGGARGGPPGGRWGRGRGPG. 2 PDZ domains span residues 224-314 and 402-486; these read TIVL…LRRT and EVEL…VARP. The tract at residues 515–590 is disordered; sequence HNEAMQPTAN…SLKSKRDLGQ (76 aa). Residues 548–566 are compositionally biased toward basic and acidic residues; that stretch reads NHEKDSGVGRTDESLRNDE. A coiled-coil region spans residues 655–689; the sequence is NQGEQEGVEHELQLLNEELRNIELECQNIMQAHRL. The span at 726-735 shows a compositional bias: basic and acidic residues; sequence EHPEKSDKDS. Positions 726–819 are disordered; it reads EHPEKSDKDS…VLEGSKLPDQ (94 aa). Positions 736–750 are enriched in polar residues; the sequence is SSAYNTAESCRSTPL. The span at 774–799 shows a compositional bias: low complexity; it reads STMAATQSSSGQSSKESTSTKAKTTE. Residues 805-819 show a composition bias toward basic and acidic residues; the sequence is ESKEKVLEGSKLPDQ.

This chain is PDZ domain-containing RING finger protein 4 (PDZRN4), found in Homo sapiens (Human).